The chain runs to 233 residues: Octanoyltransferase (233 aa).

The BPL/LPL catalytic domain maps to 36-211; sequence DTTPDEIWLV…EFTRQLGYPT (176 aa). Substrate-binding positions include 75–82, 142–144, and 155–157; these read RGGQVTYH, SLG, and GLA. Cysteine 173 serves as the catalytic Acyl-thioester intermediate.

This sequence belongs to the LipB family.

It localises to the cytoplasm. The enzyme catalyses octanoyl-[ACP] + L-lysyl-[protein] = N(6)-octanoyl-L-lysyl-[protein] + holo-[ACP] + H(+). It participates in protein modification; protein lipoylation via endogenous pathway; protein N(6)-(lipoyl)lysine from octanoyl-[acyl-carrier-protein]: step 1/2. Functionally, catalyzes the transfer of endogenously produced octanoic acid from octanoyl-acyl-carrier-protein onto the lipoyl domains of lipoate-dependent enzymes. Lipoyl-ACP can also act as a substrate although octanoyl-ACP is likely to be the physiological substrate. This chain is Octanoyltransferase, found in Yersinia pestis bv. Antiqua (strain Antiqua).